Here is a 279-residue protein sequence, read N- to C-terminus: NADPH-dependent 7-cyano-7-deazaguanine reductase (279 aa).

A substrate-binding site is contributed by 86–88 (IES). 88–89 (SK) contacts NADPH. The active-site Thioimide intermediate is cysteine 187. Aspartate 194 (proton donor) is an active-site residue. 226–227 (HE) is a binding site for substrate. 255–256 (RG) provides a ligand contact to NADPH.

It belongs to the GTP cyclohydrolase I family. QueF type 2 subfamily. As to quaternary structure, homodimer.

The protein localises to the cytoplasm. The catalysed reaction is 7-aminomethyl-7-carbaguanine + 2 NADP(+) = 7-cyano-7-deazaguanine + 2 NADPH + 3 H(+). It functions in the pathway tRNA modification; tRNA-queuosine biosynthesis. In terms of biological role, catalyzes the NADPH-dependent reduction of 7-cyano-7-deazaguanine (preQ0) to 7-aminomethyl-7-deazaguanine (preQ1). This is NADPH-dependent 7-cyano-7-deazaguanine reductase from Actinobacillus pleuropneumoniae serotype 7 (strain AP76).